Reading from the N-terminus, the 593-residue chain is Monoterpene synthase 7, chloroplastic (593 aa).

The N-terminal 39 residues, 1–39 (MSVSLSFAASATFGFRGGLGGFSRPAAAIKQWRCLPRIQ), are a transit peptide targeting the chloroplast. Asp-348, Asp-352, Asp-491, and Glu-499 together coordinate Mg(2+). The DDXXD motif signature appears at 348-352 (DDVYD).

Belongs to the terpene synthase family. Tpsa subfamily. Mg(2+) is required as a cofactor. It depends on Mn(2+) as a cofactor. As to expression, highly expressed in flowers, petals and sepals, but almost undetectable in vegetative organs.

The protein resides in the plastid. Its subcellular location is the chloroplast. It carries out the reaction (2E)-geranyl diphosphate = sabinene + diphosphate. The catalysed reaction is (2E)-geranyl diphosphate = terpinolene + diphosphate. It catalyses the reaction (2E)-geranyl diphosphate = alpha-pinene + diphosphate. The enzyme catalyses (2E)-geranyl diphosphate = beta-pinene + diphosphate. It carries out the reaction (2E)-geranyl diphosphate = beta-myrcene + diphosphate. The catalysed reaction is (2E)-geranyl diphosphate = alpha-terpinene + diphosphate. It catalyses the reaction (2E)-geranyl diphosphate = beta-phellandrene + diphosphate. The enzyme catalyses (2E)-geranyl diphosphate = gamma-terpinene + diphosphate. Its pathway is secondary metabolite biosynthesis; terpenoid biosynthesis. Monoterpene synthase involved in the biosynthesis of volatile compounds present in floral scent. Mediates the conversion of (2E)-geranyl diphosphate (GPP) into sabinene and sub-products such as alpha-thujene, alpha-pinene, beta-pinene, myrcene, alpha-phellandrene, alpha-terpinene, beta-phellandrene, gamma-terpinene and terpinolene. Unable to use farnesyl diphosphate (FPP) as substrate. This chain is Monoterpene synthase 7, chloroplastic, found in Hedychium coronarium (White butterfly ginger-lily).